A 241-amino-acid polypeptide reads, in one-letter code: Endothelial protein C receptor (241 aa).

A signal peptide spans 1 to 20 (MLTKFLSLLLLLLLLGCAFC). Residues 21–213 (NSDGSQSLHM…GSQTGRSYTS (193 aa)) lie on the Extracellular side of the membrane. 5 N-linked (GlcNAc...) asparagine glycosylation sites follow: asparagine 47, asparagine 64, asparagine 139, asparagine 165, and asparagine 175. The helical transmembrane segment at 214–234 (LVLGILMGCFIIAGVAVGIFL) threads the bilayer. At 235–241 (CTGGRRC) the chain is on the cytoplasmic side.

It localises to the membrane. Its function is as follows. Binds activated protein C. Enhances protein C activation by the thrombin-thrombomodulin complex; plays a role in the protein C pathway controlling blood coagulation. In Rattus norvegicus (Rat), this protein is Endothelial protein C receptor (Procr).